We begin with the raw amino-acid sequence, 169 residues long: Ribosome maturation factor RimM (169 aa).

The PRC barrel domain maps to 94 to 166 (EEGFYDHELE…TATITPPDGL (73 aa)).

It belongs to the RimM family. In terms of assembly, binds ribosomal protein uS19.

It is found in the cytoplasm. Its function is as follows. An accessory protein needed during the final step in the assembly of 30S ribosomal subunit, possibly for assembly of the head region. Essential for efficient processing of 16S rRNA. May be needed both before and after RbfA during the maturation of 16S rRNA. It has affinity for free ribosomal 30S subunits but not for 70S ribosomes. This Corynebacterium efficiens (strain DSM 44549 / YS-314 / AJ 12310 / JCM 11189 / NBRC 100395) protein is Ribosome maturation factor RimM.